Here is a 295-residue protein sequence, read N- to C-terminus: Protoheme IX farnesyltransferase (295 aa).

Helical transmembrane passes span 30–50, 51–71, 93–115, 119–136, 148–168, 175–195, 219–239, 244–264, and 275–295; these read LVVL…HPLI, AVIS…INMW, ISRS…IMMI, YISG…IYVY, IVIG…SVTG, LVLF…LSLL, IHIL…GLFL, LYEI…FQVF, and MFTY…LSSF.

This sequence belongs to the UbiA prenyltransferase family. Protoheme IX farnesyltransferase subfamily.

It localises to the cell inner membrane. It catalyses the reaction heme b + (2E,6E)-farnesyl diphosphate + H2O = Fe(II)-heme o + diphosphate. It participates in porphyrin-containing compound metabolism; heme O biosynthesis; heme O from protoheme: step 1/1. In terms of biological role, converts heme B (protoheme IX) to heme O by substitution of the vinyl group on carbon 2 of heme B porphyrin ring with a hydroxyethyl farnesyl side group. The polypeptide is Protoheme IX farnesyltransferase (Ehrlichia ruminantium (strain Welgevonden)).